We begin with the raw amino-acid sequence, 55 residues long: Cortexin domain containing 2 (55 aa).

A helical membrane pass occupies residues 16–36 (FAIAFVVLLFLFLIVMIFRCA).

It is found in the membrane. This Homo sapiens (Human) protein is Cortexin domain containing 2.